The following is a 106-amino-acid chain: Large ribosomal subunit protein eL34 (106 aa).

Belongs to the eukaryotic ribosomal protein eL34 family.

This Hyperthermus butylicus (strain DSM 5456 / JCM 9403 / PLM1-5) protein is Large ribosomal subunit protein eL34.